The primary structure comprises 221 residues: Small ribosomal subunit protein uS5 (221 aa).

Positions 46–109 constitute an S5 DRBM domain; the sequence is LKDEVINIER…DNAKLNIIEI (64 aa).

This sequence belongs to the universal ribosomal protein uS5 family. In terms of assembly, part of the 30S ribosomal subunit. Contacts protein S4.

With S4 and S12 plays an important role in translational accuracy. This Picrophilus torridus (strain ATCC 700027 / DSM 9790 / JCM 10055 / NBRC 100828 / KAW 2/3) protein is Small ribosomal subunit protein uS5.